The chain runs to 371 residues: Chorismate synthase (371 aa).

NADP(+) is bound by residues Arg48 and Arg54. FMN contacts are provided by residues 132–134 (RSS), 244–245 (NA), Gly289, 304–308 (KPTSS), and Arg330.

It belongs to the chorismate synthase family. In terms of assembly, homotetramer. FMNH2 serves as cofactor.

It catalyses the reaction 5-O-(1-carboxyvinyl)-3-phosphoshikimate = chorismate + phosphate. The protein operates within metabolic intermediate biosynthesis; chorismate biosynthesis; chorismate from D-erythrose 4-phosphate and phosphoenolpyruvate: step 7/7. Its function is as follows. Catalyzes the anti-1,4-elimination of the C-3 phosphate and the C-6 proR hydrogen from 5-enolpyruvylshikimate-3-phosphate (EPSP) to yield chorismate, which is the branch point compound that serves as the starting substrate for the three terminal pathways of aromatic amino acid biosynthesis. This reaction introduces a second double bond into the aromatic ring system. This is Chorismate synthase from Methylobacterium nodulans (strain LMG 21967 / CNCM I-2342 / ORS 2060).